The primary structure comprises 188 residues: Peptidyl-tRNA hydrolase (188 aa).

Tyr16 is a binding site for tRNA. His21 serves as the catalytic Proton acceptor. TRNA-binding residues include Phe66, Asn68, and Asn114.

This sequence belongs to the PTH family. As to quaternary structure, monomer.

It is found in the cytoplasm. It carries out the reaction an N-acyl-L-alpha-aminoacyl-tRNA + H2O = an N-acyl-L-amino acid + a tRNA + H(+). Functionally, hydrolyzes ribosome-free peptidyl-tRNAs (with 1 or more amino acids incorporated), which drop off the ribosome during protein synthesis, or as a result of ribosome stalling. In terms of biological role, catalyzes the release of premature peptidyl moieties from peptidyl-tRNA molecules trapped in stalled 50S ribosomal subunits, and thus maintains levels of free tRNAs and 50S ribosomes. This chain is Peptidyl-tRNA hydrolase, found in Geobacter sp. (strain M21).